Reading from the N-terminus, the 701-residue chain is Elongation factor G (701 aa).

The tr-type G domain maps to 8 to 290 (SLYRNIGISA…AVVELLPAPT (283 aa)). GTP-binding positions include 17–24 (AHIDAGKT), 88–92 (DTPGH), and 142–145 (NKMD).

Belongs to the TRAFAC class translation factor GTPase superfamily. Classic translation factor GTPase family. EF-G/EF-2 subfamily.

It is found in the cytoplasm. Its function is as follows. Catalyzes the GTP-dependent ribosomal translocation step during translation elongation. During this step, the ribosome changes from the pre-translocational (PRE) to the post-translocational (POST) state as the newly formed A-site-bound peptidyl-tRNA and P-site-bound deacylated tRNA move to the P and E sites, respectively. Catalyzes the coordinated movement of the two tRNA molecules, the mRNA and conformational changes in the ribosome. In Neisseria meningitidis serogroup B (strain ATCC BAA-335 / MC58), this protein is Elongation factor G.